The following is a 1390-amino-acid chain: DNA-directed RNA polymerase subunit beta'' (1390 aa).

Cys220, Cys291, Cys298, and Cys301 together coordinate Zn(2+).

The protein belongs to the RNA polymerase beta' chain family. RpoC2 subfamily. In plastids the minimal PEP RNA polymerase catalytic core is composed of four subunits: alpha, beta, beta', and beta''. When a (nuclear-encoded) sigma factor is associated with the core the holoenzyme is formed, which can initiate transcription. Zn(2+) serves as cofactor.

The protein localises to the plastid. Its subcellular location is the chloroplast. It catalyses the reaction RNA(n) + a ribonucleoside 5'-triphosphate = RNA(n+1) + diphosphate. DNA-dependent RNA polymerase catalyzes the transcription of DNA into RNA using the four ribonucleoside triphosphates as substrates. In Populus alba (White poplar), this protein is DNA-directed RNA polymerase subunit beta''.